The following is a 381-amino-acid chain: Genome polyprotein (381 aa).

The interval 115-155 is disordered; it reads ANDTIDTGGNSKKDVKPEQGSIQPSSNKGKEKDVNAGTSGT.

Belongs to the potyviridae genome polyprotein family. Post-translationally, genome polyprotein of potyviruses undergoes post-translational proteolytic processing by the main proteinase NIa-pro resulting in the production of at least ten individual proteins. The P1 proteinase and the HC-pro cleave only their respective C-termini autocatalytically. 6K1 is essential for proper proteolytic separation of P3 from CI.

It is found in the virion. It carries out the reaction RNA(n) + a ribonucleoside 5'-triphosphate = RNA(n+1) + diphosphate. In terms of biological role, an RNA-dependent RNA polymerase that plays an essential role in the virus replication. Functionally, involved in aphid transmission, cell-to-cell and systemis movement, encapsidation of the viral RNA and in the regulation of viral RNA amplification. This chain is Genome polyprotein, found in Capsicum annuum (Capsicum pepper).